Reading from the N-terminus, the 264-residue chain is Undecaprenyl-diphosphatase (264 aa).

Transmembrane regions (helical) follow at residues 38-58 (RSDFFNIVIQAGAIVAVVLVF), 75-95 (REYVFKLGAAFLVTAVVGLVV), 106-126 (VSPVAWALIIGGVWMLLVEAY), 136-156 (VTWTVAIGVGLAQVVAGVFPG), 181-201 (FVFLVGIPTMFAASAYTFLEM), 217-237 (VAFLAAAITGFVVVKWLMGYI), and 242-262 (FTAFAIYRIALGAALLLWLPS).

It belongs to the UppP family.

Its subcellular location is the cell membrane. It carries out the reaction di-trans,octa-cis-undecaprenyl diphosphate + H2O = di-trans,octa-cis-undecaprenyl phosphate + phosphate + H(+). Functionally, catalyzes the dephosphorylation of undecaprenyl diphosphate (UPP). Confers resistance to bacitracin. The sequence is that of Undecaprenyl-diphosphatase from Stenotrophomonas maltophilia (strain K279a).